The following is a 251-amino-acid chain: Triosephosphate isomerase (251 aa).

Position 9 to 11 (N9 to K11) interacts with substrate. The Electrophile role is filled by H95. E167 serves as the catalytic Proton acceptor. Substrate contacts are provided by residues G173, S213, and G234 to G235. S213 carries the post-translational modification Phosphoserine.

The protein belongs to the triosephosphate isomerase family. As to quaternary structure, homodimer.

Its subcellular location is the cytoplasm. The enzyme catalyses D-glyceraldehyde 3-phosphate = dihydroxyacetone phosphate. The protein operates within carbohydrate biosynthesis; gluconeogenesis. It functions in the pathway carbohydrate degradation; glycolysis; D-glyceraldehyde 3-phosphate from glycerone phosphate: step 1/1. Functionally, involved in the gluconeogenesis. Catalyzes stereospecifically the conversion of dihydroxyacetone phosphate (DHAP) to D-glyceraldehyde-3-phosphate (G3P). The polypeptide is Triosephosphate isomerase (Halalkalibacterium halodurans (strain ATCC BAA-125 / DSM 18197 / FERM 7344 / JCM 9153 / C-125) (Bacillus halodurans)).